The following is a 289-amino-acid chain: MLRDLFVKKKKYAAIPSEQVRKDVPDGVMTKCPKCKKIMYTKEVLKNLKVCVNCGYHHPMNAWERLDSILDEGSFREYDKEMVSLNPLEFPNYEEKLESDRKKTELNEAVVTGEGTIDDMLVVVAVMDSRFRMGSMGSVVGEKIARAVEKAYDLQVPFIIFTASGGARMQEGILSLMQMAKTSVALKKHSNAGGLFISVMTHPTTGGVSASFASLGDYNLAEPGALIGFAGRRVIEQTVREKLPEDFQTAEFLLEHGQLDAVVHRDDMRESLRKILEVHQGGEMAVWQS.

The CoA carboxyltransferase N-terminal domain maps to 28-289; that stretch reads VMTKCPKCKK…QGGEMAVWQS (262 aa). Residues C32, C35, C51, and C54 each contribute to the Zn(2+) site. A C4-type zinc finger spans residues 32-54; the sequence is CPKCKKIMYTKEVLKNLKVCVNC.

Belongs to the AccD/PCCB family. In terms of assembly, acetyl-CoA carboxylase is a heterohexamer composed of biotin carboxyl carrier protein (AccB), biotin carboxylase (AccC) and two subunits each of ACCase subunit alpha (AccA) and ACCase subunit beta (AccD). Zn(2+) serves as cofactor.

It localises to the cytoplasm. It carries out the reaction N(6)-carboxybiotinyl-L-lysyl-[protein] + acetyl-CoA = N(6)-biotinyl-L-lysyl-[protein] + malonyl-CoA. It participates in lipid metabolism; malonyl-CoA biosynthesis; malonyl-CoA from acetyl-CoA: step 1/1. Its function is as follows. Component of the acetyl coenzyme A carboxylase (ACC) complex. Biotin carboxylase (BC) catalyzes the carboxylation of biotin on its carrier protein (BCCP) and then the CO(2) group is transferred by the transcarboxylase to acetyl-CoA to form malonyl-CoA. The sequence is that of Acetyl-coenzyme A carboxylase carboxyl transferase subunit beta from Bacillus anthracis (strain A0248).